A 92-amino-acid chain; its full sequence is Small ribosomal subunit protein uS19c (92 aa).

Belongs to the universal ribosomal protein uS19 family.

The protein localises to the plastid. Its subcellular location is the chloroplast. Protein S19 forms a complex with S13 that binds strongly to the 16S ribosomal RNA. The polypeptide is Small ribosomal subunit protein uS19c (Amborella trichopoda).